A 252-amino-acid polypeptide reads, in one-letter code: 3-dehydroquinate dehydratase (252 aa).

3-dehydroquinate contacts are provided by residues Ser21, 46–48 (EWR), and Arg82. The active-site Proton donor/acceptor is the His143. The Schiff-base intermediate with substrate role is filled by Lys170. 3-dehydroquinate contacts are provided by Arg213, Ser232, and Gln236.

This sequence belongs to the type-I 3-dehydroquinase family. As to quaternary structure, homodimer.

It carries out the reaction 3-dehydroquinate = 3-dehydroshikimate + H2O. It participates in metabolic intermediate biosynthesis; chorismate biosynthesis; chorismate from D-erythrose 4-phosphate and phosphoenolpyruvate: step 3/7. Functionally, involved in the third step of the chorismate pathway, which leads to the biosynthesis of aromatic amino acids. Catalyzes the cis-dehydration of 3-dehydroquinate (DHQ) and introduces the first double bond of the aromatic ring to yield 3-dehydroshikimate. The sequence is that of 3-dehydroquinate dehydratase from Escherichia coli (strain K12 / MC4100 / BW2952).